Here is a 260-residue protein sequence, read N- to C-terminus: Electron transfer flavoprotein subunit beta (260 aa).

Belongs to the ETF beta-subunit/FixA family. As to quaternary structure, heterodimer of an alpha and a beta subunit. The cofactor is FAD. AMP serves as cofactor.

The electron transfer flavoprotein serves as a specific electron acceptor for other dehydrogenases. It transfers the electrons to the main respiratory chain via ETF-ubiquinone oxidoreductase (ETF dehydrogenase). The protein is Electron transfer flavoprotein subunit beta (etfB) of Thermoanaerobacterium thermosaccharolyticum (strain ATCC 7956 / DSM 571 / NCIMB 9385 / NCA 3814 / NCTC 13789 / WDCM 00135 / 2032) (Clostridium thermosaccharolyticum).